We begin with the raw amino-acid sequence, 351 residues long: D-alanine--D-alanine ligase (351 aa).

In terms of domain architecture, ATP-grasp spans 146–340 (KEIMLYNNIK…YEDLCESIVL (195 aa)). 173–226 (AFDYPMVVKPNSGGSSIGTRIVHDEAELAESLKDAYRFDDEIIVEEFITGREFS) is an ATP binding site. Positions 295, 307, and 309 each coordinate Mg(2+).

It belongs to the D-alanine--D-alanine ligase family. It depends on Mg(2+) as a cofactor. Mn(2+) serves as cofactor.

The protein resides in the cytoplasm. The enzyme catalyses 2 D-alanine + ATP = D-alanyl-D-alanine + ADP + phosphate + H(+). It functions in the pathway cell wall biogenesis; peptidoglycan biosynthesis. Its function is as follows. Cell wall formation. In Pediococcus pentosaceus (strain ATCC 25745 / CCUG 21536 / LMG 10740 / 183-1w), this protein is D-alanine--D-alanine ligase.